A 266-amino-acid polypeptide reads, in one-letter code: 2-C-methyl-D-erythritol 4-phosphate cytidylyltransferase (266 aa).

Basic and acidic residues predominate over residues 234–251 (ADDARSAEARSAEARSEE). Residues 234-266 (ADDARSAEARSAEARSEEPQFAGARSTDARSGG) are disordered.

Belongs to the IspD/TarI cytidylyltransferase family. IspD subfamily.

The catalysed reaction is 2-C-methyl-D-erythritol 4-phosphate + CTP + H(+) = 4-CDP-2-C-methyl-D-erythritol + diphosphate. The protein operates within isoprenoid biosynthesis; isopentenyl diphosphate biosynthesis via DXP pathway; isopentenyl diphosphate from 1-deoxy-D-xylulose 5-phosphate: step 2/6. In terms of biological role, catalyzes the formation of 4-diphosphocytidyl-2-C-methyl-D-erythritol from CTP and 2-C-methyl-D-erythritol 4-phosphate (MEP). The chain is 2-C-methyl-D-erythritol 4-phosphate cytidylyltransferase from Frankia casuarinae (strain DSM 45818 / CECT 9043 / HFP020203 / CcI3).